The sequence spans 303 residues: Ornithine carbamoyltransferase (303 aa).

Carbamoyl phosphate-binding positions include 52–55, glutamine 79, arginine 103, and 130–133; these read STRT and HPCQ. L-ornithine-binding positions include asparagine 161, aspartate 221, and 225 to 226; that span reads SM. Carbamoyl phosphate-binding positions include 260-261 and arginine 288; that span reads CL.

It belongs to the aspartate/ornithine carbamoyltransferase superfamily. OTCase family.

Its subcellular location is the cytoplasm. It catalyses the reaction carbamoyl phosphate + L-ornithine = L-citrulline + phosphate + H(+). It participates in amino-acid biosynthesis; L-arginine biosynthesis; L-arginine from L-ornithine and carbamoyl phosphate: step 1/3. Functionally, reversibly catalyzes the transfer of the carbamoyl group from carbamoyl phosphate (CP) to the N(epsilon) atom of ornithine (ORN) to produce L-citrulline. In Rhizobium meliloti (strain 1021) (Ensifer meliloti), this protein is Ornithine carbamoyltransferase (argF).